The primary structure comprises 353 residues: Photosystem II protein D1 (353 aa).

T2 carries the post-translational modification N-acetylthreonine. T2 carries the phosphothreonine modification. 3 consecutive transmembrane segments (helical) span residues 29–46 (YIGW…TATS), 118–133 (HFLL…EWEL), and 142–156 (WIAI…AATA). H118 provides a ligand contact to chlorophyll a. Y126 serves as a coordination point for pheophytin a. D170 and E189 together coordinate [CaMn4O5] cluster. The chain crosses the membrane as a helical span at residues 197–218 (FHMLGVAGVFGGSLFSAMHGSL). H198 lines the chlorophyll a pocket. A quinone contacts are provided by residues H215 and 264 to 265 (SF). Residue H215 coordinates Fe cation. A Fe cation-binding site is contributed by H272. The helical transmembrane segment at 274–288 (FLAAWPVIGIWFTAL) threads the bilayer. 4 residues coordinate [CaMn4O5] cluster: H332, E333, D342, and A344. The propeptide occupies 345–353 (TFEVSATNA).

It belongs to the reaction center PufL/M/PsbA/D family. As to quaternary structure, PSII is composed of 1 copy each of membrane proteins PsbA, PsbB, PsbC, PsbD, PsbE, PsbF, PsbH, PsbI, PsbJ, PsbK, PsbL, PsbM, PsbT, PsbX, PsbY, PsbZ, Psb30/Ycf12, at least 3 peripheral proteins of the oxygen-evolving complex and a large number of cofactors. It forms dimeric complexes. The cofactor is The D1/D2 heterodimer binds P680, chlorophylls that are the primary electron donor of PSII, and subsequent electron acceptors. It shares a non-heme iron and each subunit binds pheophytin, quinone, additional chlorophylls, carotenoids and lipids. D1 provides most of the ligands for the Mn4-Ca-O5 cluster of the oxygen-evolving complex (OEC). There is also a Cl(-1) ion associated with D1 and D2, which is required for oxygen evolution. The PSII complex binds additional chlorophylls, carotenoids and specific lipids.. Tyr-161 forms a radical intermediate that is referred to as redox-active TyrZ, YZ or Y-Z. Post-translationally, C-terminally processed by CTPA; processing is essential to allow assembly of the oxygen-evolving complex and thus photosynthetic growth.

It localises to the plastid membrane. It carries out the reaction 2 a plastoquinone + 4 hnu + 2 H2O = 2 a plastoquinol + O2. Photosystem II (PSII) is a light-driven water:plastoquinone oxidoreductase that uses light energy to abstract electrons from H(2)O, generating O(2) and a proton gradient subsequently used for ATP formation. It consists of a core antenna complex that captures photons, and an electron transfer chain that converts photonic excitation into a charge separation. The D1/D2 (PsbA/PsbD) reaction center heterodimer binds P680, the primary electron donor of PSII as well as several subsequent electron acceptors. This is Photosystem II protein D1 from Cuscuta gronovii (Common dodder).